A 471-amino-acid polypeptide reads, in one-letter code: Amidophosphoribosyltransferase (471 aa).

The active-site Nucleophile is Cys-2. Positions 2-224 (CGIFGIYSYE…PGEIIEIKDG (223 aa)) constitute a Glutamine amidotransferase type-2 domain. Cys-255 provides a ligand contact to [4Fe-4S] cluster. Positions 302, 364, and 365 each coordinate Mg(2+). [4Fe-4S] cluster is bound by residues Cys-401, Cys-450, and Cys-453.

The protein in the C-terminal section; belongs to the purine/pyrimidine phosphoribosyltransferase family. Mg(2+) is required as a cofactor. [4Fe-4S] cluster serves as cofactor.

It carries out the reaction 5-phospho-beta-D-ribosylamine + L-glutamate + diphosphate = 5-phospho-alpha-D-ribose 1-diphosphate + L-glutamine + H2O. The protein operates within purine metabolism; IMP biosynthesis via de novo pathway; N(1)-(5-phospho-D-ribosyl)glycinamide from 5-phospho-alpha-D-ribose 1-diphosphate: step 1/2. Functionally, catalyzes the formation of phosphoribosylamine from phosphoribosylpyrophosphate (PRPP) and glutamine. This is Amidophosphoribosyltransferase from Methanocaldococcus jannaschii (strain ATCC 43067 / DSM 2661 / JAL-1 / JCM 10045 / NBRC 100440) (Methanococcus jannaschii).